A 306-amino-acid polypeptide reads, in one-letter code: GTPase IMAP family member 1 (306 aa).

The tract at residues methionine 1–glutamine 21 is disordered. The Cytoplasmic segment spans residues methionine 1–arginine 272. Residues glutamate 25 to glutamine 229 enclose the AIG1-type G domain. Residues glycine 34–serine 41 form a G1 region. Residues glycine 34 to alanine 42 and serine 55 each bind GTP. The interval serine 61–alanine 65 is G2. Residues aspartate 82–aspartate 85 are G3. The segment at threonine 152 to glutamate 155 is G4. GTP is bound by residues arginine 153–glutamate 155 and asparagine 190. The G5 stretch occupies residues aspartate 189 to arginine 191. The chain crosses the membrane as a helical; Anchor for type IV membrane protein span at residues serine 273–leucine 292. Over histidine 293–aspartate 306 the chain is Lumenal.

Belongs to the TRAFAC class TrmE-Era-EngA-EngB-Septin-like GTPase superfamily. AIG1/Toc34/Toc159-like paraseptin GTPase family. IAN subfamily. As to expression, predominantly expressed in the spleen and to a lesser extent in the lymph nodes. Detected in T-cells.

Its subcellular location is the endoplasmic reticulum membrane. The protein localises to the golgi apparatus membrane. May regulate lymphocyte survival. Required for normal levels of mature T-lymphocytes and mature B-cells. The polypeptide is GTPase IMAP family member 1 (GIMAP1) (Homo sapiens (Human)).